The chain runs to 284 residues: Bifunctional protein FolD (284 aa).

Residues G165–S167 and S190 each bind NADP(+).

Belongs to the tetrahydrofolate dehydrogenase/cyclohydrolase family. In terms of assembly, homodimer.

The catalysed reaction is (6R)-5,10-methylene-5,6,7,8-tetrahydrofolate + NADP(+) = (6R)-5,10-methenyltetrahydrofolate + NADPH. It catalyses the reaction (6R)-5,10-methenyltetrahydrofolate + H2O = (6R)-10-formyltetrahydrofolate + H(+). It functions in the pathway one-carbon metabolism; tetrahydrofolate interconversion. Catalyzes the oxidation of 5,10-methylenetetrahydrofolate to 5,10-methenyltetrahydrofolate and then the hydrolysis of 5,10-methenyltetrahydrofolate to 10-formyltetrahydrofolate. The chain is Bifunctional protein FolD from Streptococcus equi subsp. zooepidemicus (strain MGCS10565).